The following is a 445-amino-acid chain: Questin oxidase (445 aa).

It belongs to the questin oxidase family. It depends on NADPH as a cofactor. In terms of tissue distribution, specifically expressed in conidia.

Its pathway is secondary metabolite biosynthesis. In terms of biological role, questin oxidase; part of the gene cluster that mediates the biosynthesis of trypacidin, a mycotoxin with antiprotozoal activity and that plays a role in the infection process. The pathway begins with the synthesis of atrochrysone thioester by the polyketide synthase (PKS) tpcC. The atrochrysone carboxyl ACP thioesterase tpcB then breaks the thioester bond and releases the atrochrysone carboxylic acid from tpcC. The decarboxylase tpcK converts atrochrysone carboxylic acid to atrochrysone which is further reduced into emodin anthrone. The next step is performed by the emodin anthrone oxygenase tpcL that catalyzes the oxidation of emodinanthrone to emodin. Emodin O-methyltransferase encoded by tpcA catalyzes methylation of the 8-hydroxy group of emodin to form questin. Ring cleavage of questin by questin oxidase tpcI leads to desmethylsulochrin via several intermediates including questin epoxide. Another methylation step catalyzed by tpcM leads to the formation of sulochrin which is further converted to monomethylsulfochrin by tpcH. Finally, the tpcJ catalyzes the conversion of monomethylsulfochrin to trypacidin. Trypacidin is toxic for human pulmonary and bronchial epithelial cells by initiating the intracellular formation of nitric oxide (NO) and hydrogen peroxide (H(2)O(2)), thus triggering host necrotic cell death. The trypacidin pathway is also able to produce endocrocin via a distinct route from the endocrocin Enc pathway. The protein is Questin oxidase of Aspergillus fumigatus (strain ATCC MYA-4609 / CBS 101355 / FGSC A1100 / Af293) (Neosartorya fumigata).